The following is a 361-amino-acid chain: Porphobilinogen deaminase (361 aa).

At Ser2 the chain carries N-acetylserine. Phosphoserine is present on Ser69. Lys74 is modified (N6-acetyllysine). A Phosphoserine modification is found at Ser147. Cys261 bears the S-(dipyrrolylmethanemethyl)cysteine mark.

This sequence belongs to the HMBS family. Monomer. Dipyrromethane serves as cofactor.

It is found in the cytoplasm. It localises to the cytosol. It carries out the reaction 4 porphobilinogen + H2O = hydroxymethylbilane + 4 NH4(+). It participates in porphyrin-containing compound metabolism; protoporphyrin-IX biosynthesis; coproporphyrinogen-III from 5-aminolevulinate: step 2/4. As part of the heme biosynthetic pathway, catalyzes the sequential polymerization of four molecules of porphobilinogen to form hydroxymethylbilane, also known as preuroporphyrinogen. Catalysis begins with the assembly of the dipyrromethane cofactor by the apoenzyme from two molecules of porphobilinogen or from preuroporphyrinogen. The covalently linked cofactor acts as a primer, around which the tetrapyrrole product is assembled. In the last step of catalysis, the product, preuroporphyrinogen, is released, leaving the cofactor bound to the holodeaminase intact. The chain is Porphobilinogen deaminase (HMBS) from Bos taurus (Bovine).